The chain runs to 632 residues: PWWP domain-containing protein 5 (632 aa).

The PWWP domain occupies 97–158 (DSDLVWAKLR…ASQIKPFHQN (62 aa)). Residues 310–452 (RKTDYKDNAE…AERKISSPDE (143 aa)) form a disordered region. 4 stretches are compositionally biased toward basic and acidic residues: residues 313 to 326 (DYKD…EKTL), 339 to 364 (STEK…GKSE), 371 to 383 (QQKE…HSNE), and 425 to 449 (KSTE…KISS). Residues 352-359 (KRKVESSE) carry the Nuclear localization signal motif.

This sequence belongs to the PDP family. In terms of assembly, component of the PRC2 (polycomb repressive complex 2) complex which regulates histone methylation on histone H3K27.

Its subcellular location is the nucleus. May influence gene expression by regulating the function of the PRC2 complex and modulating H3K27me3 level. The polypeptide is PWWP domain-containing protein 5 (Arabidopsis thaliana (Mouse-ear cress)).